Reading from the N-terminus, the 255-residue chain is Glutamate racemase (255 aa).

Residues 7–8 and 39–40 contribute to the substrate site; these read DS and YG. The Proton donor/acceptor role is filled by C70. 71–72 is a substrate binding site; sequence NT. C181 serves as the catalytic Proton donor/acceptor. 182–183 provides a ligand contact to substrate; it reads TH.

This sequence belongs to the aspartate/glutamate racemases family.

It carries out the reaction L-glutamate = D-glutamate. The protein operates within cell wall biogenesis; peptidoglycan biosynthesis. Provides the (R)-glutamate required for cell wall biosynthesis. The sequence is that of Glutamate racemase from Helicobacter pylori (strain P12).